The primary structure comprises 164 residues: Dynein regulatory complex protein 8 (164 aa).

EF-hand domains are found at residues 16 to 51 and 94 to 129; these read ELHKKIKDAFEVFDHESNNTVDVREIGTIIRSLGCC and AAEDILLRAFEVLDPAKRGFLTKDELVKYMTEEGEP.

This sequence belongs to the DRC8 family. As to quaternary structure, component of the nexin-dynein regulatory complex (N-DRC).

Its subcellular location is the cytoplasm. The protein localises to the cytoskeleton. The protein resides in the flagellum axoneme. In terms of biological role, component of the nexin-dynein regulatory complex (N-DRC), a key regulator of ciliary/flagellar motility which maintains the alignment and integrity of the distal axoneme and regulates microtubule sliding in motile axonemes. The sequence is that of Dynein regulatory complex protein 8 (Efcab2) from Mus musculus (Mouse).